The primary structure comprises 591 residues: Protein misato homolog 1 (591 aa).

The protein belongs to the misato family.

The protein localises to the mitochondrion outer membrane. Its subcellular location is the cytoplasm. Functionally, involved in the regulation of mitochondrial distribution and morphology. Required for mitochondrial fusion and mitochondrial network formation. This Danio rerio (Zebrafish) protein is Protein misato homolog 1 (msto1).